We begin with the raw amino-acid sequence, 324 residues long: Mating-type protein A-3 (324 aa).

Residues 147–215 (TSRPRNQFVL…RHRAENPHLY (69 aa)) constitute a DNA-binding region (HMG box).

The protein localises to the nucleus. Required, together with mating-type protein A-2, for efficient ascospore formation. This is Mating-type protein A-3 (mtA-3) from Neurospora crassa (strain ATCC 24698 / 74-OR23-1A / CBS 708.71 / DSM 1257 / FGSC 987).